The chain runs to 465 residues: Argininosuccinate lyase (465 aa).

The protein belongs to the lyase 1 family. Argininosuccinate lyase subfamily.

It is found in the cytoplasm. It catalyses the reaction 2-(N(omega)-L-arginino)succinate = fumarate + L-arginine. It functions in the pathway amino-acid biosynthesis; L-arginine biosynthesis; L-arginine from L-ornithine and carbamoyl phosphate: step 3/3. This chain is Argininosuccinate lyase, found in Variovorax paradoxus (strain S110).